Reading from the N-terminus, the 132-residue chain is Small ribosomal subunit protein uS8 (132 aa).

Belongs to the universal ribosomal protein uS8 family. Part of the 30S ribosomal subunit. Contacts proteins S5 and S12.

One of the primary rRNA binding proteins, it binds directly to 16S rRNA central domain where it helps coordinate assembly of the platform of the 30S subunit. The polypeptide is Small ribosomal subunit protein uS8 (Anaeromyxobacter dehalogenans (strain 2CP-C)).